Here is a 316-residue protein sequence, read N- to C-terminus: Homoserine kinase (316 aa).

P97–S107 contributes to the ATP binding site.

This sequence belongs to the GHMP kinase family. Homoserine kinase subfamily.

Its subcellular location is the cytoplasm. The catalysed reaction is L-homoserine + ATP = O-phospho-L-homoserine + ADP + H(+). It participates in amino-acid biosynthesis; L-threonine biosynthesis; L-threonine from L-aspartate: step 4/5. Its function is as follows. Catalyzes the ATP-dependent phosphorylation of L-homoserine to L-homoserine phosphate. The polypeptide is Homoserine kinase (Prochlorococcus marinus (strain MIT 9313)).